The chain runs to 287 residues: Beta-lactamase GES-1 (287 aa).

A signal peptide spans 1 to 18 (MRFIHALLLAGIAHSAYA). Cys-63 and Cys-233 form a disulfide bridge. Ser-64 serves as the catalytic Nucleophile; acyl-ester intermediate. The a beta-lactam site is built by Lys-67, Ser-125, Glu-161, and Thr-232.

The protein belongs to the class-A beta-lactamase family. In terms of assembly, monomer. May form dimers.

It carries out the reaction a beta-lactam + H2O = a substituted beta-amino acid. With respect to regulation, inhibited by the beta-lactamase-blocking agents clavulanic acid, tazobactam, sulbactam and tazobactam and the carbapenem, imipenem. Inhibition by imipenem may involve Gly-165. Extended-spectrum beta-lactamase (ESBL) which confers resistance to penicillins, as well as first, second, third and fourth-generation cephalosporins. Has ceftazidime-hydrolyzing activity. Inactive against the carbapenems, imipenem, meropenem, ertapenem and doripenem. However, weak hydrolytic activity with respect to imipenem has also been reported. The polypeptide is Beta-lactamase GES-1 (Klebsiella pneumoniae).